The primary structure comprises 401 residues: Probable tRNA sulfurtransferase (401 aa).

One can recognise a THUMP domain in the interval E60 to D165. ATP is bound by residues M183–I184, H208–F209, R265, G287, and Q296.

It belongs to the ThiI family.

The protein resides in the cytoplasm. The catalysed reaction is [ThiI sulfur-carrier protein]-S-sulfanyl-L-cysteine + a uridine in tRNA + 2 reduced [2Fe-2S]-[ferredoxin] + ATP + H(+) = [ThiI sulfur-carrier protein]-L-cysteine + a 4-thiouridine in tRNA + 2 oxidized [2Fe-2S]-[ferredoxin] + AMP + diphosphate. It carries out the reaction [ThiS sulfur-carrier protein]-C-terminal Gly-Gly-AMP + S-sulfanyl-L-cysteinyl-[cysteine desulfurase] + AH2 = [ThiS sulfur-carrier protein]-C-terminal-Gly-aminoethanethioate + L-cysteinyl-[cysteine desulfurase] + A + AMP + 2 H(+). It participates in cofactor biosynthesis; thiamine diphosphate biosynthesis. Functionally, catalyzes the ATP-dependent transfer of a sulfur to tRNA to produce 4-thiouridine in position 8 of tRNAs, which functions as a near-UV photosensor. Also catalyzes the transfer of sulfur to the sulfur carrier protein ThiS, forming ThiS-thiocarboxylate. This is a step in the synthesis of thiazole, in the thiamine biosynthesis pathway. The sulfur is donated as persulfide by IscS. The protein is Probable tRNA sulfurtransferase of Bacillus licheniformis (strain ATCC 14580 / DSM 13 / JCM 2505 / CCUG 7422 / NBRC 12200 / NCIMB 9375 / NCTC 10341 / NRRL NRS-1264 / Gibson 46).